The sequence spans 256 residues: tRNA-cytidine(32) 2-sulfurtransferase (256 aa).

The PP-loop motif signature appears at 35–40 (SGGKDS). The [4Fe-4S] cluster site is built by Cys-110, Cys-113, and Cys-201.

Belongs to the TtcA family. Homodimer. It depends on Mg(2+) as a cofactor. [4Fe-4S] cluster serves as cofactor.

It is found in the cytoplasm. The catalysed reaction is cytidine(32) in tRNA + S-sulfanyl-L-cysteinyl-[cysteine desulfurase] + AH2 + ATP = 2-thiocytidine(32) in tRNA + L-cysteinyl-[cysteine desulfurase] + A + AMP + diphosphate + H(+). Its pathway is tRNA modification. Catalyzes the ATP-dependent 2-thiolation of cytidine in position 32 of tRNA, to form 2-thiocytidine (s(2)C32). The sulfur atoms are provided by the cysteine/cysteine desulfurase (IscS) system. The protein is tRNA-cytidine(32) 2-sulfurtransferase of Coxiella burnetii (strain RSA 331 / Henzerling II).